The following is a 191-amino-acid chain: Adenylate kinase (191 aa).

9 to 17 (GVPGVGATT) lines the ATP pocket.

Belongs to the archaeal adenylate kinase family.

It is found in the cytoplasm. It catalyses the reaction AMP + ATP = 2 ADP. The sequence is that of Adenylate kinase from Methanopyrus kandleri (strain AV19 / DSM 6324 / JCM 9639 / NBRC 100938).